A 238-amino-acid chain; its full sequence is Ribosomal RNA small subunit methyltransferase G (238 aa).

S-adenosyl-L-methionine-binding positions include glycine 77, phenylalanine 82, 128 to 129 (AE), and arginine 147.

It belongs to the methyltransferase superfamily. RNA methyltransferase RsmG family.

The protein localises to the cytoplasm. Its function is as follows. Specifically methylates the N7 position of guanine in position 535 of 16S rRNA. The sequence is that of Ribosomal RNA small subunit methyltransferase G from Geobacillus kaustophilus (strain HTA426).